The following is a 92-amino-acid chain: Small ribosomal subunit protein uS19 (92 aa).

It belongs to the universal ribosomal protein uS19 family.

Functionally, protein S19 forms a complex with S13 that binds strongly to the 16S ribosomal RNA. This is Small ribosomal subunit protein uS19 from Borrelia hermsii (strain HS1 / DAH).